Reading from the N-terminus, the 124-residue chain is Phosphoribosyl-AMP cyclohydrolase (124 aa).

Asp82 lines the Mg(2+) pocket. Cys83 provides a ligand contact to Zn(2+). Positions 84 and 86 each coordinate Mg(2+). Zn(2+)-binding residues include Cys99 and Cys106.

Belongs to the PRA-CH family. In terms of assembly, homodimer. The cofactor is Mg(2+). It depends on Zn(2+) as a cofactor.

It localises to the cytoplasm. The enzyme catalyses 1-(5-phospho-beta-D-ribosyl)-5'-AMP + H2O = 1-(5-phospho-beta-D-ribosyl)-5-[(5-phospho-beta-D-ribosylamino)methylideneamino]imidazole-4-carboxamide. It functions in the pathway amino-acid biosynthesis; L-histidine biosynthesis; L-histidine from 5-phospho-alpha-D-ribose 1-diphosphate: step 3/9. Functionally, catalyzes the hydrolysis of the adenine ring of phosphoribosyl-AMP. This chain is Phosphoribosyl-AMP cyclohydrolase, found in Zymomonas mobilis subsp. mobilis (strain ATCC 31821 / ZM4 / CP4).